A 152-amino-acid chain; its full sequence is Large ribosomal subunit protein bL9 (152 aa).

The protein belongs to the bacterial ribosomal protein bL9 family.

In terms of biological role, binds to the 23S rRNA. This is Large ribosomal subunit protein bL9 from Synechococcus sp. (strain RCC307).